A 143-amino-acid polypeptide reads, in one-letter code: Large ribosomal subunit protein uL11 (143 aa).

This sequence belongs to the universal ribosomal protein uL11 family. Part of the ribosomal stalk of the 50S ribosomal subunit. Interacts with L10 and the large rRNA to form the base of the stalk. L10 forms an elongated spine to which L12 dimers bind in a sequential fashion forming a multimeric L10(L12)X complex. One or more lysine residues are methylated.

Functionally, forms part of the ribosomal stalk which helps the ribosome interact with GTP-bound translation factors. The protein is Large ribosomal subunit protein uL11 of Pseudomonas entomophila (strain L48).